A 104-amino-acid chain; its full sequence is Ribonuclease P protein component 4 (104 aa).

Zn(2+)-binding residues include cysteine 57, cysteine 60, cysteine 83, and cysteine 86.

Belongs to the eukaryotic/archaeal RNase P protein component 4 family. As to quaternary structure, consists of a catalytic RNA component and at least 4-5 protein subunits. Zn(2+) is required as a cofactor.

The protein resides in the cytoplasm. The catalysed reaction is Endonucleolytic cleavage of RNA, removing 5'-extranucleotides from tRNA precursor.. Functionally, part of ribonuclease P, a protein complex that generates mature tRNA molecules by cleaving their 5'-ends. This is Ribonuclease P protein component 4 from Saccharolobus islandicus (strain L.S.2.15 / Lassen #1) (Sulfolobus islandicus).